We begin with the raw amino-acid sequence, 180 residues long: ATP-dependent protease subunit HslV (180 aa).

Thr-7 is an active-site residue. Ala-163, Cys-166, and Thr-169 together coordinate Na(+).

This sequence belongs to the peptidase T1B family. HslV subfamily. A double ring-shaped homohexamer of HslV is capped on each side by a ring-shaped HslU homohexamer. The assembly of the HslU/HslV complex is dependent on binding of ATP.

The protein localises to the cytoplasm. It carries out the reaction ATP-dependent cleavage of peptide bonds with broad specificity.. Its activity is regulated as follows. Allosterically activated by HslU binding. Its function is as follows. Protease subunit of a proteasome-like degradation complex believed to be a general protein degrading machinery. The polypeptide is ATP-dependent protease subunit HslV (Cytophaga hutchinsonii (strain ATCC 33406 / DSM 1761 / CIP 103989 / NBRC 15051 / NCIMB 9469 / D465)).